An 877-amino-acid chain; its full sequence is Phosphoenolpyruvate carboxylase (877 aa).

Active-site residues include histidine 138 and lysine 544.

It belongs to the PEPCase type 1 family. Requires Mg(2+) as cofactor.

The enzyme catalyses oxaloacetate + phosphate = phosphoenolpyruvate + hydrogencarbonate. Functionally, forms oxaloacetate, a four-carbon dicarboxylic acid source for the tricarboxylic acid cycle. This chain is Phosphoenolpyruvate carboxylase, found in Vibrio vulnificus (strain CMCP6).